The chain runs to 532 residues: UDP-glucuronosyltransferase 1A6 (532 aa).

Residues 1 to 26 (MACLLRSFQRISAGVFFLALWGMVVG) form the signal peptide. Asn294 and Asn346 each carry an N-linked (GlcNAc...) asparagine glycan. Residues 490–506 (VIGFLLAVVLTVAFITF) form a helical membrane-spanning segment.

This sequence belongs to the UDP-glycosyltransferase family. Isoform 1 interacts with isoform 3/i2 suggesting that oligomerization is involved in negative regulation of transferase activity by isoform 3. Isoform 1 also interacts with respective i2 isoforms of UGT1A1, UGT1A3, UGT1A4, UGT1A7, UGT1A8, UGT1A9 and UGT1A10. As to expression, expressed in skin. Isoforms 1 and 3 are expressed in kidney and liver. Isoform 1 but not isoform 2 is expressed in colon, esophagus and small intestine.

It localises to the microsome. Its subcellular location is the endoplasmic reticulum membrane. The enzyme catalyses glucuronate acceptor + UDP-alpha-D-glucuronate = acceptor beta-D-glucuronoside + UDP + H(+). The catalysed reaction is (5Z,8Z,11Z,14Z)-eicosatetraenoate + UDP-alpha-D-glucuronate = O-[(5Z),(8Z),(11Z),(14Z)-eicosatetraenoyl]-beta-D-glucuronate + UDP. It carries out the reaction 15-hydroxy-(5Z,8Z,11Z,13E)-eicosatetraenoate + UDP-alpha-D-glucuronate = 15-O-(beta-D-glucuronosyl)-(5Z,8Z,11Z,14Z)-eicosatetraenoate + UDP + H(+). It catalyses the reaction (E)-ferulate + UDP-alpha-D-glucuronate = (E)-4-O-(beta-D-glucuronosyl)-ferulate + UDP + H(+). The enzyme catalyses (E)-ferulate + UDP-alpha-D-glucuronate = (E)-ferulic acid beta-D-glucuronate ester + UDP. UDP-glucuronosyltransferase (UGT) that catalyzes phase II biotransformation reactions in which lipophilic substrates are conjugated with glucuronic acid to facilitate their inactivation and excretion from the body. Essential for the elimination and detoxification of drugs, xenobiotics and endogenous compounds. Involved in the glucuronidation of arachidonic acid (AA) and AA-derived eicosanoids including 15-HETE and 20-HETE. Conjugates small planar phenolic molecules such as 4-nitrophenol, 1-naphthol, and 4-methylumbelliferone. The bulky phenol 4-hydroxybiphenyl, androgens and estrogens are not substrates. 2-hydroxybiphenyl is an excellent substrate. Involved in the glucuronidation of the phytochemical ferulic acid at the phenolic or the carboxylic acid group. Functionally, isoform 3 lacks transferase activity but acts as a negative regulator of isoform 1. This Homo sapiens (Human) protein is UDP-glucuronosyltransferase 1A6.